The chain runs to 4085 residues: Replicase polyprotein 1a (4085 aa).

Residues 2-109 (ACNRVTLAVA…EFDVVFGKRG (108 aa)) enclose the CoV Nsp1 globular domain. A CoV Nsp2 N-terminal domain is found at 113–359 (VTYTDQYLCG…RNSVTDECRL (247 aa)). Residues Cys-246, Cys-248, Cys-265, and Cys-266 each coordinate Zn(2+). The interval 246 to 266 (CTCGTKSWSVGDWTGFKSSCC) is C4. The CoV Nsp2 middle domain maps to 389 to 775 (YDDIFAESKP…LEAYNAFLDT (387 aa)). Residues 773–897 (LDTVVSTVKI…LPVAFTKAAG (125 aa)) enclose the CoV Nsp2 C-terminal domain. Residues 898 to 993 (GKVSFSDDVE…VMISEWPLSV (96 aa)) enclose the Ubiquitin-like 1 domain. A Peptidase C16 1 domain is found at 1016–1268 (VNSIFDIETV…DTTPKEEFVV (253 aa)). The active-site For PL1-PRO activity is Cys-1054. The C4-type 1; degenerate zinc-finger motif lies at 1126–1157 (CSCTSGRLEESGAVLFCTPTKKAFPYGTCLNC). Residues His-1205 and Asp-1218 each act as for PL1-PRO activity in the active site. The Macro domain maps to 1269–1436 (KEKLNAFLVH…KVKDFVSGLV (168 aa)). The region spanning 1600–1655 (AKVITIKVTEDGVNVHDVTVTTDKSFEQQVGVIADKDKDLSGAVPSDLNTSELLTK) is the Ubiquitin-like 2 domain. The 252-residue stretch at 1663-1914 (EFYGFKDAVT…TVKPKPVINQ (252 aa)) folds into the Peptidase C16 2 domain. The active-site For PL2-PRO activity is the Cys-1701. Residues Cys-1780, Cys-1783, Cys-1813, and His-1815 each contribute to the Zn(2+) site. The segment at 1780-1815 (CVECDAKFKNSVASINSAIVCASVKRDGVQVGYCVH) adopts a C4-type 2; atypical zinc-finger fold. Residues His-1863 and Asp-1868 each act as for PL2-PRO activity in the active site. The interval 1925-2115 (FGDFLIHNFV…STVGVFLGYK (191 aa)) is HD1. A helical transmembrane segment spans residues 1998 to 2018 (LLLLIYTLYSVVLLCVRFGPF). Positions 2005-2070 (LYSVVLLCVR…LDVVWKHITD (66 aa)) constitute a 3Ecto domain. Disulfide bonds link Cys-2021–Cys-2048 and Cys-2039–Cys-2045. The next 2 helical transmembrane spans lie at 2068 to 2088 (ITDPLFSNMQPFIVMVLLLIF) and 2095 to 2115 (CFLLYFVAQMISTVGVFLGYK). The tract at residues 2144 to 2234 (SFVRHVLFGC…ITKTNVQPTG (91 aa)) is Y1. In terms of domain architecture, CoV Nsp3 Y spans 2144 to 2483 (SFVRHVLFGC…PATSIVAKQG (340 aa)). Zn(2+)-binding residues include His-2148, Cys-2153, Cys-2158, Cys-2161, Cys-2194, His-2197, Cys-2201, and Cys-2204. A ZF1 region spans residues 2148 to 2161 (HVLFGCENPDCIAC). Positions 2194 to 2204 (CKKHRFFCVDC) are ZF2. A Y2 region spans residues 2235-2324 (PAYVMIDKVE…LVDSELLSTL (90 aa)). The tract at residues 2235-2483 (PAYVMIDKVE…PATSIVAKQG (249 aa)) is coV-Y. A Y3 region spans residues 2325–2381 (SVDFNGVLHKAYIDVLRNSFGKDLNANMSLAECKRALGLSISDHEFTSAISNAHRCD). Residues 2382 to 2483 (VLLSDLSFNN…PATSIVAKQG (102 aa)) are Y4. Transmembrane regions (helical) follow at residues 2491-2511 (LTWLWLLCGLVCLIQFYLCFF), 2731-2751 (LWNLVFNILSMFSSSFSVAAM), 2755-2775 (ILLNCALGAFAIFCCFLVTKF), 2782-2802 (LSVGVCTVVVAVLLNNVSYIV), 2809-2829 (MIAYAILYFFATRSLRYAWIW), and 2834-2854 (LIAYISFAPWWLCAWYFLAML). An HD2 region spans residues 2491–2854 (LTWLWLLCGL…LCAWYFLAML (364 aa)). The Nsp4C domain maps to 2870 to 2965 (LFEGDKFVGT…PTVSYGSTLQ (96 aa)). Residues 2966 to 3267 (AGLRKMAQPS…VKQMFGVNLQ (302 aa)) form the Peptidase C30 domain. Active-site for 3CL-PRO activity residues include His-3006 and Cys-3109. 7 helical membrane passes run 3281 to 3301 (FAGFFVMFWAELFVYTTTIWV), 3304 to 3324 (GFLTPFMILLVALSLCLTFVV), 3328 to 3348 (VLFLQVFLLPSIIVAAIQNCA), 3367 to 3387 (VMQMDIQGFVNIFICLFVALL), 3401 to 3421 (CTYLFSLIAVLYTALYSYDYV), 3422 to 3442 (SLLVMLLCAISNEWYIGAIIF), and 3467 to 3487 (LLFYMLLGFVSCMYYGLLYWI). The HD3 stretch occupies residues 3281 to 3487 (FAGFFVMFWA…CMYYGLLYWI (207 aa)). The 83-residue stretch at 3547–3629 (SKLTDLKCTN…SYFENDSILQ (83 aa)) folds into the RdRp Nsp7 cofactor domain. The RdRp Nsp8 cofactor domain occupies 3630 to 3824 (SVASSFVGMP…LTCERVVKLQ (195 aa)). Residues 3825–3933 (NNEIMPGKMK…GYIGATVRLQ (109 aa)) form the Nsp9 ssRNA-binding domain. Residues 3934 to 4072 (AGKQTEFVSN…DRTAIQSFDN (139 aa)) form the ExoN/MTase coactivator domain. The Zn(2+) site is built by Cys-4007, Cys-4010, His-4016, Cys-4023, Cys-4049, Cys-4052, Cys-4060, and Cys-4062. 2 zinc fingers span residues 4007-4023 (CIYCRAHVAHPTMDGFC) and 4049-4062 (CKVCGCWLNHGCTC).

This sequence belongs to the coronaviruses polyprotein 1ab family. 3CL-PRO exists as monomer and homodimer. Eight copies of nsp7 and eight copies of nsp8 assemble to form a heterohexadecamer. Nsp9 is a dimer. Nsp10 forms a dodecamer. Specific enzymatic cleavages in vivo by its own proteases yield mature proteins. 3CL-PRO and PL-PRO proteinases are autocatalytically processed.

The protein resides in the host membrane. The protein localises to the host cytoplasm. It is found in the host perinuclear region. It catalyses the reaction Thiol-dependent hydrolysis of ester, thioester, amide, peptide and isopeptide bonds formed by the C-terminal Gly of ubiquitin (a 76-residue protein attached to proteins as an intracellular targeting signal).. In terms of biological role, the papain-like proteinase 1 (PLP1) and papain-like proteinase 2 (PLP2) are responsible for the cleavages located at the N-terminus of the replicase polyprotein. In addition, PLP2 possesses a deubiquitinating/deISGylating activity and processes both 'Lys-48'- and 'Lys-63'-linked polyubiquitin chains from cellular substrates. PLP2 also antagonizes innate immune induction of type I interferon by blocking the nuclear translocation of host IRF-3. Responsible for the majority of cleavages as it cleaves the C-terminus of replicase polyprotein at 11 sites. Recognizes substrates containing the core sequence [ILMVF]-Q-|-[SGACN]. Inhibited by the substrate-analog Cbz-Val-Asn-Ser-Thr-Leu-Gln-CMK. Also contains an ADP-ribose-1''-phosphate (ADRP)-binding function. Its function is as follows. Nsp7-nsp8 hexadecamer may possibly confer processivity to the polymerase, maybe by binding to dsRNA or by producing primers utilized by the latter. Functionally, nsp9 is a ssRNA-binding protein. This is Replicase polyprotein 1a from Homo sapiens (Human).